The primary structure comprises 425 residues: MFIDKAKIYVKSGDGGNGSVSFRREKYVPLGGPDGGDGGKGGDIVLVSDPDMTTLLDFSYKRKYKADAGEGGSRSRSYGKDAEDLYIKVPMGTVVKEASTGKIMADLSHENDKVVVVKGGRGGRGNARFATATRQAPNFAEPGMPGEEREIILELKLLADVGLVGFPNVGKSTILSTVSNAKPKIANYHFTTLKPNLGVASIKGLEPFVIADIPGIIEGASEGVGLGLDFLRHIERTRVLIHVIDISGIEGRDPYEDFLKINEELKNYSVKLWDRPQIVAANKSDLVAEDKRFEEFKEKIQKLGDYKIFKISAATGEGIKELMAEVSKTLATIPVTQVEIKREDLFIPEEKRFTYEILREDDGTFVVEGSFVDRLLGSVNVNEPDGLRYFYVVLKNKGVIDDLIKKGIKDGDMVRLNDFEFEFVI.

An Obg domain is found at 1 to 158; the sequence is MFIDKAKIYV…REIILELKLL (158 aa). The region spanning 159 to 331 is the OBG-type G domain; the sequence is ADVGLVGFPN…LMAEVSKTLA (173 aa). GTP-binding positions include 165–172, 190–194, 212–215, 282–285, and 312–314; these read GFPNVGKS, FTTLK, DIPG, NKSD, and SAA. Ser-172 and Thr-192 together coordinate Mg(2+). The OCT domain maps to 345–425; that stretch reads LFIPEEKRFT…LNDFEFEFVI (81 aa).

Belongs to the TRAFAC class OBG-HflX-like GTPase superfamily. OBG GTPase family. In terms of assembly, monomer. Mg(2+) serves as cofactor.

Its subcellular location is the cytoplasm. An essential GTPase which binds GTP, GDP and possibly (p)ppGpp with moderate affinity, with high nucleotide exchange rates and a fairly low GTP hydrolysis rate. Plays a role in control of the cell cycle, stress response, ribosome biogenesis and in those bacteria that undergo differentiation, in morphogenesis control. This chain is GTPase Obg, found in Clostridium tetani (strain Massachusetts / E88).